Reading from the N-terminus, the 671-residue chain is uncharacterized protein (671 aa).

The chain crosses the membrane as a helical span at residues 39 to 56 (ATVTVVILLLILLLGWGY).

It localises to the membrane. This is an uncharacterized protein from Treponema pallidum (strain Nichols).